The primary structure comprises 699 residues: SPS-sensor serine protease component SSY5 (699 aa).

Disordered regions lie at residues 1–113 (MVRF…LQGF) and 129–158 (VKEE…GNAR). The propeptide occupies 1–381 (MVRFFGLNKE…YCVKDYIKKA (381 aa)). Positions 8–18 (NKEKNEEKENT) are enriched in basic and acidic residues. The segment covering 24–38 (NEQNAAETSSSNVSG) has biased composition (polar residues). A compositionally biased stretch (basic and acidic residues) spans 39-51 (NEERIDPNSRDTN). The segment covering 61–78 (STTFGSSIQSSSIFSRGR) has biased composition (low complexity). Residues 83–93 (TGASSSMATSE) show a composition bias toward polar residues. Over residues 144–154 (SSSTSSTLATS) the composition is skewed to low complexity. Positions 459–699 (FAITCAHVVL…QWDIDPQLDG (241 aa)) are serine protease. Residues His-465, Asp-545, and Ser-640 each act as charge relay system in the active site.

This sequence belongs to the peptidase S64 family. Component of the plasma membrane SPS (SSY1-PTR3-SSY5) amino acid sensor complex. In terms of processing, the propeptide is autoproteolytically cleaved from the catalytic domain but remains associated, forming an inactive protease complex. This processing occurs even in the absence of signaling.

Its subcellular location is the cell membrane. In terms of biological role, protease component of the SPS-sensor system, which regulates the expression of several amino acid-metabolizing enzymes and amino acid- and peptide-permeases in response to extracellular amino acid levels by controlling the activity of two transcription factors, STP1 and STP2. Catalyzes the activation of these transcription factors, which are synthesized as latent cytoplasmic precursors, by proteolytic removal of an N-terminal inhibitory domain containing cytoplasmic retention motifs. SSY5 binds as an inactive protease complex to STP1. In response to extracellular amino acids and dependent on the other SPS-sensor components, the inhibitory propeptide is induced to dissociate, and thereby enables the catalytic domain to process STP1. The sequence is that of SPS-sensor serine protease component SSY5 (SSY5) from Saccharomyces cerevisiae (strain AWRI1631) (Baker's yeast).